We begin with the raw amino-acid sequence, 197 residues long: Probable nicotinate-nucleotide adenylyltransferase (197 aa).

This sequence belongs to the NadD family.

The enzyme catalyses nicotinate beta-D-ribonucleotide + ATP + H(+) = deamido-NAD(+) + diphosphate. It participates in cofactor biosynthesis; NAD(+) biosynthesis; deamido-NAD(+) from nicotinate D-ribonucleotide: step 1/1. Catalyzes the reversible adenylation of nicotinate mononucleotide (NaMN) to nicotinic acid adenine dinucleotide (NaAD). This chain is Probable nicotinate-nucleotide adenylyltransferase, found in Borrelia garinii subsp. bavariensis (strain ATCC BAA-2496 / DSM 23469 / PBi) (Borreliella bavariensis).